The chain runs to 94 residues: uncharacterized protein (94 aa).

Positions 13–67 (IQESLDELNVSLREFARAMEIAPSTASRLLTGKAALTPEMAIKLSVVIGSSPQMW) constitute an HTH cro/C1-type domain. Residues 24–43 (LREFARAMEIAPSTASRLLT) constitute a DNA-binding region (H-T-H motif).

The protein belongs to the VapA/VapI family.

This is an uncharacterized protein from Escherichia coli (strain K12).